The sequence spans 142 residues: Large ribosomal subunit protein uL11 (142 aa).

Belongs to the universal ribosomal protein uL11 family. Part of the ribosomal stalk of the 50S ribosomal subunit. Interacts with L10 and the large rRNA to form the base of the stalk. L10 forms an elongated spine to which L12 dimers bind in a sequential fashion forming a multimeric L10(L12)X complex. One or more lysine residues are methylated.

Its function is as follows. Forms part of the ribosomal stalk which helps the ribosome interact with GTP-bound translation factors. The polypeptide is Large ribosomal subunit protein uL11 (Methylocella silvestris (strain DSM 15510 / CIP 108128 / LMG 27833 / NCIMB 13906 / BL2)).